The chain runs to 332 residues: Large ribosomal subunit protein uL10 (332 aa).

A disordered region spans residues 294–332 (QAAAAPVAVEDNTEEPEEEEEEEEDAAESAAAGLGALFG). A compositionally biased stretch (acidic residues) spans 304 to 320 (DNTEEPEEEEEEEEDAA).

The protein belongs to the universal ribosomal protein uL10 family. As to quaternary structure, part of the 50S ribosomal subunit. Forms part of the ribosomal stalk which helps the ribosome interact with GTP-bound translation factors. Forms a heptameric L10(L12)2(L12)2(L12)2 complex, where L10 forms an elongated spine to which the L12 dimers bind in a sequential fashion.

Forms part of the ribosomal stalk, playing a central role in the interaction of the ribosome with GTP-bound translation factors. The polypeptide is Large ribosomal subunit protein uL10 (Methanosphaera stadtmanae (strain ATCC 43021 / DSM 3091 / JCM 11832 / MCB-3)).